The primary structure comprises 119 residues: Large ribosomal subunit protein bL19 (119 aa).

This sequence belongs to the bacterial ribosomal protein bL19 family.

Functionally, this protein is located at the 30S-50S ribosomal subunit interface and may play a role in the structure and function of the aminoacyl-tRNA binding site. The sequence is that of Large ribosomal subunit protein bL19 from Idiomarina loihiensis (strain ATCC BAA-735 / DSM 15497 / L2-TR).